The sequence spans 101 residues: NADH-quinone oxidoreductase subunit K (101 aa).

3 consecutive transmembrane segments (helical) span residues leucine 4–leucine 24, isoleucine 30–phenylalanine 50, and phenylalanine 62–valine 82.

Belongs to the complex I subunit 4L family. In terms of assembly, NDH-1 is composed of 14 different subunits. Subunits NuoA, H, J, K, L, M, N constitute the membrane sector of the complex.

It localises to the cell inner membrane. It carries out the reaction a quinone + NADH + 5 H(+)(in) = a quinol + NAD(+) + 4 H(+)(out). Its function is as follows. NDH-1 shuttles electrons from NADH, via FMN and iron-sulfur (Fe-S) centers, to quinones in the respiratory chain. The immediate electron acceptor for the enzyme in this species is believed to be ubiquinone. Couples the redox reaction to proton translocation (for every two electrons transferred, four hydrogen ions are translocated across the cytoplasmic membrane), and thus conserves the redox energy in a proton gradient. This Xylella fastidiosa (strain Temecula1 / ATCC 700964) protein is NADH-quinone oxidoreductase subunit K.